A 358-amino-acid chain; its full sequence is Ganglioside-induced differentiation-associated protein 1 (358 aa).

Residues valine 24–arginine 105 enclose the GST N-terminal domain. Residues lysine 50, lysine 172, lysine 173, lysine 188, and lysine 190 each participate in a glycyl lysine isopeptide (Lys-Gly) (interchain with G-Cter in ubiquitin) cross-link. In terms of domain architecture, GST C-terminal spans proline 153–phenylalanine 309. Lysine 203 is modified (N6-acetyllysine; alternate). Residue lysine 203 forms a Glycyl lysine isopeptide (Lys-Gly) (interchain with G-Cter in ubiquitin); alternate linkage. Residues lysine 206, lysine 207, and lysine 214 each participate in a glycyl lysine isopeptide (Lys-Gly) (interchain with G-Cter in ubiquitin) cross-link. The next 2 helical transmembrane spans lie at valine 292–alanine 312 and leucine 320–phenylalanine 340. Residues leucine 320–phenylalanine 358 form a required for mitochondrial localization region.

Belongs to the GST superfamily. In terms of assembly, homodimer. In terms of processing, ubiquitinated by PRKN during mitophagy, leading to its degradation and enhancement of mitophagy. Deubiquitinated by USP30. As to expression, expressed in brain, spinal cord, muscles and intestinal villi. In the central nervous system expressed most prominently in the cortex, cerebellum, thalamus, olfactory bulb, and spinal cord. Expressed also in sciatic nerves and in dorsal root ganglia.

It localises to the mitochondrion outer membrane. Its subcellular location is the cytoplasm. In terms of biological role, regulates the mitochondrial network by promoting mitochondrial fission. This is Ganglioside-induced differentiation-associated protein 1 (Gdap1) from Mus musculus (Mouse).